A 417-amino-acid chain; its full sequence is Indole-3-pyruvate monooxygenase YUCCA6 (417 aa).

36–41 lines the FAD pocket; it reads GAGPSG. Residue 204-209 participates in NADP(+) binding; sequence GCGNSG.

The protein belongs to the FMO family. It depends on FAD as a cofactor. Highly expressed in roots but modestly expressed in the cauline leaves and flowers. Expressed in anthers.

It localises to the cytoplasm. It carries out the reaction indole-3-pyruvate + NADPH + O2 + H(+) = (indol-3-yl)acetate + CO2 + NADP(+) + H2O. It participates in plant hormone metabolism; auxin biosynthesis. Involved in auxin biosynthesis via the indole-3-pyruvic acid (IPA) pathway. Also able to convert in vitro phenyl pyruvate (PPA) to phenyl acetic acid (PAA). Required for the formation of floral organs and vascular tissues. Belongs to the set of redundant YUCCA genes probably responsible for auxin biosynthesis in shoots. The protein is Indole-3-pyruvate monooxygenase YUCCA6 (YUC6) of Arabidopsis thaliana (Mouse-ear cress).